Here is a 378-residue protein sequence, read N- to C-terminus: Ribosomal RNA large subunit methyltransferase G (378 aa).

This sequence belongs to the methyltransferase superfamily. RlmG family.

The protein localises to the cytoplasm. The catalysed reaction is guanosine(1835) in 23S rRNA + S-adenosyl-L-methionine = N(2)-methylguanosine(1835) in 23S rRNA + S-adenosyl-L-homocysteine + H(+). In terms of biological role, specifically methylates the guanine in position 1835 (m2G1835) of 23S rRNA. This is Ribosomal RNA large subunit methyltransferase G from Salmonella paratyphi B (strain ATCC BAA-1250 / SPB7).